We begin with the raw amino-acid sequence, 217 residues long: Growth hormone variant (217 aa).

Residues 1-26 (MAAGSRTSLLLAFGLLCLPWLQEGSA) form the signal peptide. Cystine bridges form between Cys-79-Cys-191 and Cys-208-Cys-215. Residue Ser-132 is modified to Phosphoserine. The N-linked (GlcNAc...) asparagine glycan is linked to Asn-166. Ser-176 is modified (phosphoserine).

This sequence belongs to the somatotropin/prolactin family. In terms of tissue distribution, expressed in the placenta.

It localises to the secreted. Plays an important role in growth control. Its major role in stimulating body growth is to stimulate the liver and other tissues to secrete IGF1. It stimulates both the differentiation and proliferation of myoblasts. It also stimulates amino acid uptake and protein synthesis in muscle and other tissues. In Pan troglodytes (Chimpanzee), this protein is Growth hormone variant (GH2).